Consider the following 687-residue polypeptide: Mediator of RNA polymerase II transcription subunit 17 (687 aa).

The segment covering 30 to 43 has biased composition (low complexity); sequence LSSNPNSSLHSPTS. Disordered regions lie at residues 30–70 and 130–189; these read LSSN…NKTK and QLGS…ETDD. 3 stretches are compositionally biased toward basic and acidic residues: residues 56-70, 136-147, and 167-183; these read TSIR…NKTK, SDGHNSEKKDTD, and KDNP…KTNE.

It belongs to the Mediator complex subunit 17 family. Component of the Mediator complex, which is composed of at least 21 subunits that form three structurally distinct submodules. The Mediator head module contains MED6, MED8, MED11, SRB4/MED17, SRB5/MED18, ROX3/MED19, SRB2/MED20 and SRB6/MED22, the middle module contains MED1, MED4, NUT1/MED5, MED7, CSE2/MED9, NUT2/MED10, SRB7/MED21 and SOH1/MED31, and the tail module contains MED2, PGD1/MED3, RGR1/MED14, GAL11/MED15 and SIN4/MED16. The head and the middle modules interact directly with RNA polymerase II, whereas the elongated tail module interacts with gene-specific regulatory proteins. The head module may also interact with the TFIIF complex. SRB4/MED17 interacts directly with MED6, MED11, ROX3/MED19, SRB2/MED20 and SRB6/MED22. Interacts directly with the activator GAL4.

The protein localises to the nucleus. Functionally, component of the Mediator complex, a coactivator involved in the regulated transcription of nearly all RNA polymerase II-dependent genes. Mediator functions as a bridge to convey information from gene-specific regulatory proteins to the basal RNA polymerase II transcription machinery. The Mediator complex, having a compact conformation in its free form, is recruited to promoters by direct interactions with regulatory proteins and serves for the assembly of a functional preinitiation complex with RNA polymerase II and the general transcription factors. The Mediator complex unfolds to an extended conformation and partially surrounds RNA polymerase II, specifically interacting with the unphosphorylated form of the C-terminal domain (CTD) of RNA polymerase II. The Mediator complex dissociates from the RNA polymerase II holoenzyme and stays at the promoter when transcriptional elongation begins. The sequence is that of Mediator of RNA polymerase II transcription subunit 17 (SRB4) from Saccharomyces cerevisiae (strain ATCC 204508 / S288c) (Baker's yeast).